The primary structure comprises 185 residues: Elongation factor P (185 aa).

Belongs to the elongation factor P family.

It localises to the cytoplasm. The protein operates within protein biosynthesis; polypeptide chain elongation. Its function is as follows. Involved in peptide bond synthesis. Stimulates efficient translation and peptide-bond synthesis on native or reconstituted 70S ribosomes in vitro. Probably functions indirectly by altering the affinity of the ribosome for aminoacyl-tRNA, thus increasing their reactivity as acceptors for peptidyl transferase. The sequence is that of Elongation factor P from Burkholderia lata (strain ATCC 17760 / DSM 23089 / LMG 22485 / NCIMB 9086 / R18194 / 383).